The chain runs to 275 residues: D-apionate oxidoisomerase (275 aa).

Residues 11–13, Glu-32, and Asp-68 each bind NAD(+); that span reads GKM. Zn(2+)-binding residues include His-113 and Glu-183.

It belongs to the ApnO family. Zn(2+) serves as cofactor.

The enzyme catalyses D-apionate + NAD(+) = 3-oxoisoapionate + NADH + H(+). It participates in carbohydrate metabolism. Functionally, involved in catabolism of D-apiose. Catalyzes the conversion of D-apionate to 3-oxo-isoapionate. This chain is D-apionate oxidoisomerase, found in Rhizobium rhizogenes (strain K84 / ATCC BAA-868) (Agrobacterium radiobacter).